We begin with the raw amino-acid sequence, 329 residues long: N-acetyl-gamma-glutamyl-phosphate reductase (329 aa).

Cysteine 155 is a catalytic residue.

Belongs to the NAGSA dehydrogenase family. Type 1 subfamily.

The protein localises to the cytoplasm. The enzyme catalyses N-acetyl-L-glutamate 5-semialdehyde + phosphate + NADP(+) = N-acetyl-L-glutamyl 5-phosphate + NADPH + H(+). It functions in the pathway amino-acid biosynthesis; L-arginine biosynthesis; N(2)-acetyl-L-ornithine from L-glutamate: step 3/4. In terms of biological role, catalyzes the NADPH-dependent reduction of N-acetyl-5-glutamyl phosphate to yield N-acetyl-L-glutamate 5-semialdehyde. This is N-acetyl-gamma-glutamyl-phosphate reductase from Shewanella piezotolerans (strain WP3 / JCM 13877).